Reading from the N-terminus, the 360-residue chain is Probable L-asparaginase 3 (360 aa).

The N-terminal stretch at 1–16 (MWSSIISFLFFSVALC) is a signal peptide. Residues asparagine 27, asparagine 35, and asparagine 40 are each glycosylated (N-linked (GlcNAc...) asparagine). One can recognise an Asparaginase/glutaminase domain in the interval 39 to 359 (PNVTIFAMGG…QNITDIFSLE (321 aa)). Residue threonine 49 is the O-isoaspartyl threonine intermediate of the active site. N-linked (GlcNAc...) asparagine glycosylation is present at asparagine 82. A substrate-binding site is contributed by serine 96. Asparagine 106 is a glycosylation site (N-linked (GlcNAc...) asparagine). 129–130 (TD) lines the substrate pocket. 5 N-linked (GlcNAc...) asparagine glycosylation sites follow: asparagine 144, asparagine 179, asparagine 246, asparagine 302, and asparagine 351.

The protein belongs to the asparaginase 1 family.

Its subcellular location is the secreted. The protein resides in the cell wall. It catalyses the reaction L-asparagine + H2O = L-aspartate + NH4(+). This chain is Probable L-asparaginase 3, found in Schizosaccharomyces pombe (strain 972 / ATCC 24843) (Fission yeast).